The chain runs to 134 residues: Photosystem II lipoprotein Psb27 (134 aa).

The signal sequence occupies residues 1-24; it reads MSFLKNQLSRLLALILVVAIGLTA. A lipid anchor (N-palmitoyl cysteine) is attached at C25. A lipid anchor (S-diacylglycerol cysteine) is attached at C25.

Belongs to the Psb27 family. Monomer. Forms a complex with a monomeric, partially assembled PSII. This is probably the complex in which D1 is assembled and/or replaced. Present in 6-10% of PSII complexes; mostly in monomeric PSII. These PSII do not evolve oxygen, do not have an assembled calcium-manganese-oxide cluster. Psb27-containing PSII seem to be assembly intermediates; a wild-type strain includes the intrinsic membrane proteins, Psb27, Pbs28, substoichiometric amounts of PsbO and PsbQ but no PsbU or PsbV, while a ctpA deletion mutant includes the intrinsic membrane proteins (D1 as precursor), Psb27, a very low amount of PsbO and PsbQ, but no PsbU or PsbV. Small amounts of Psb27 interact with the lumenal domain of CP43 (psbC) in wild-type and a ctpA mutant. A small amount can also be detected in monomeric and trimeric photosystem I (PSI), possibly via association with PsaB.

The protein localises to the cellular thylakoid membrane. Functionally, plays a role in the repair and/or biogenesis of the calcium-manganese-oxide cluster on the lumenal face of the thylakoid membrane. Photosystem II (PSII) complexes containing this protein are monomeric, are assembly intermediates lacking the calcium-manganese-oxide cluster and miss some of the lumenal subunits. Probably blocks binding of some of the small lumenal subunits. The sequence is that of Photosystem II lipoprotein Psb27 from Synechocystis sp. (strain ATCC 27184 / PCC 6803 / Kazusa).